The sequence spans 409 residues: AP-1-like transcription factor YAP2 (409 aa).

Short sequence motifs (bipartite nuclear localization signal) lie at residues M17–N24 and S47–R54. A disordered region spans residues D26–K64. The 64-residue stretch at S43 to Y106 folds into the bZIP domain. The basic motif stretch occupies residues K46–K69. Residues L71 to L99 form a leucine-zipper region. Positions Q127–T156 are disordered. The tract at residues C356–C387 is c-CRD. The Nuclear export signal signature appears at L372–S379.

Belongs to the bZIP family. YAP subfamily. Homodimer; disulfide-linked, upon oxidation. Interacts in the nucleus with the nuclear export protein CRM1. Interacts with RCK1. Depending on the oxidative stress inducing agent, CAD1/YAP2 can undergo two distinct conformational changes, both through oxidation of cysteine residues, and both masking the nuclear export signal, thus abolishing nuclear export by CRM1/exportin 1. Peroxide stress induces the formation of possible intramolecular disulfide bonds as well as intermolcular disulfide within a homodimer. Cadmium may bind directly to specific cysteine residues (Cys-391 and either Cys-356 or Cys-387) in the c-CRD.

It localises to the cytoplasm. The protein localises to the nucleus. Functionally, transcription activator involved in oxidative stress response and cadmium resistance. Regulates the transcription of genes overrepresented for the function of stabilizing proteins including the inducible Hsp90-family protein HSP82. Preferentially binds to promoters with the core binding site 5'-TTA[CG]TAA-3'. Activity of the transcription factor is controlled through oxidation of specific cysteine residues resulting in the alteration of its subcellular location. Activation by alkyl hydroperoxides or cadmium induces nuclear accumulation and as a result CAD1/YAP2 transcriptional activity. This Saccharomyces cerevisiae (strain ATCC 204508 / S288c) (Baker's yeast) protein is AP-1-like transcription factor YAP2.